The chain runs to 60 residues: Large ribosomal subunit protein bL33 (60 aa).

It belongs to the bacterial ribosomal protein bL33 family.

This chain is Large ribosomal subunit protein bL33, found in Chlorobium luteolum (strain DSM 273 / BCRC 81028 / 2530) (Pelodictyon luteolum).